Here is a 279-residue protein sequence, read N- to C-terminus: Putative pyruvate, phosphate dikinase regulatory protein (279 aa).

153-160 (GVSRTSKT) is an ADP binding site.

This sequence belongs to the pyruvate, phosphate/water dikinase regulatory protein family. PDRP subfamily.

The enzyme catalyses N(tele)-phospho-L-histidyl/L-threonyl-[pyruvate, phosphate dikinase] + ADP = N(tele)-phospho-L-histidyl/O-phospho-L-threonyl-[pyruvate, phosphate dikinase] + AMP + H(+). The catalysed reaction is N(tele)-phospho-L-histidyl/O-phospho-L-threonyl-[pyruvate, phosphate dikinase] + phosphate + H(+) = N(tele)-phospho-L-histidyl/L-threonyl-[pyruvate, phosphate dikinase] + diphosphate. In terms of biological role, bifunctional serine/threonine kinase and phosphorylase involved in the regulation of the pyruvate, phosphate dikinase (PPDK) by catalyzing its phosphorylation/dephosphorylation. The chain is Putative pyruvate, phosphate dikinase regulatory protein from Rhodopseudomonas palustris (strain BisB5).